A 911-amino-acid polypeptide reads, in one-letter code: Protein translocase subunit SecA (911 aa).

ATP contacts are provided by residues Q87, 105–109 (GEGKT), and D512. Over residues 561-571 (RHESRRIDNQL) the composition is skewed to basic and acidic residues. Residues 561 to 583 (RHESRRIDNQLRGRSGRQGDPGS) form a disordered region. Positions 895, 897, 906, and 907 each coordinate Zn(2+).

It belongs to the SecA family. Monomer and homodimer. Part of the essential Sec protein translocation apparatus which comprises SecA, SecYEG and auxiliary proteins SecDF-YajC and YidC. Zn(2+) is required as a cofactor.

The protein localises to the cell inner membrane. Its subcellular location is the cytoplasm. The catalysed reaction is ATP + H2O + cellular proteinSide 1 = ADP + phosphate + cellular proteinSide 2.. Its function is as follows. Part of the Sec protein translocase complex. Interacts with the SecYEG preprotein conducting channel. Has a central role in coupling the hydrolysis of ATP to the transfer of proteins into and across the cell membrane, serving both as a receptor for the preprotein-SecB complex and as an ATP-driven molecular motor driving the stepwise translocation of polypeptide chains across the membrane. This chain is Protein translocase subunit SecA, found in Pseudomonas putida (strain W619).